The primary structure comprises 190 residues: Ribose 1,5-bisphosphate phosphokinase PhnN (190 aa).

An ATP-binding site is contributed by 19-26; it reads GPSGVGKD.

This sequence belongs to the ribose 1,5-bisphosphokinase family.

The enzyme catalyses alpha-D-ribose 1,5-bisphosphate + ATP = 5-phospho-alpha-D-ribose 1-diphosphate + ADP. It functions in the pathway metabolic intermediate biosynthesis; 5-phospho-alpha-D-ribose 1-diphosphate biosynthesis; 5-phospho-alpha-D-ribose 1-diphosphate from D-ribose 5-phosphate (route II): step 3/3. Functionally, catalyzes the phosphorylation of ribose 1,5-bisphosphate to 5-phospho-D-ribosyl alpha-1-diphosphate (PRPP). The protein is Ribose 1,5-bisphosphate phosphokinase PhnN of Ruegeria sp. (strain TM1040) (Silicibacter sp.).